Consider the following 263-residue polypeptide: Kallikrein 1-related peptidase b24 (263 aa).

The N-terminal stretch at 1–17 (MWFLILFLALSLGGIDA) is a signal peptide. A propeptide spans 18 to 24 (APPVQSR) (activation peptide). The 236-residue stretch at 25 to 260 (VVGGFKCEKN…FASWIKDTMA (236 aa)) folds into the Peptidase S1 domain. 5 disulfides stabilise this stretch: Cys31-Cys175, Cys50-Cys66, Cys154-Cys221, Cys186-Cys200, and Cys211-Cys236. The Charge relay system role is filled by His65. N-linked (GlcNAc...) asparagine glycans are attached at residues Asn69 and Asn105. The active-site Charge relay system is Asp122. Residue Asn185 is glycosylated (N-linked (GlcNAc...) asparagine). Ser215 acts as the Charge relay system in catalysis.

It belongs to the peptidase S1 family. Kallikrein subfamily.

It catalyses the reaction Preferential cleavage of Arg-|-Xaa bonds in small molecule substrates. Highly selective action to release kallidin (lysyl-bradykinin) from kininogen involves hydrolysis of Met-|-Xaa or Leu-|-Xaa.. In terms of biological role, glandular kallikreins cleave Met-Lys and Arg-Ser bonds in kininogen to release Lys-bradykinin. The polypeptide is Kallikrein 1-related peptidase b24 (Klk1b24) (Mus musculus (Mouse)).